Here is a 150-residue protein sequence, read N- to C-terminus: Small ribosomal subunit protein eS19 (150 aa).

The protein belongs to the eukaryotic ribosomal protein eS19 family. Part of the 30S ribosomal subunit.

In terms of biological role, may be involved in maturation of the 30S ribosomal subunit. The chain is Small ribosomal subunit protein eS19 from Thermoplasma acidophilum (strain ATCC 25905 / DSM 1728 / JCM 9062 / NBRC 15155 / AMRC-C165).